Reading from the N-terminus, the 365-residue chain is MISYPFFSLSPPGLVPPPMAVPPVEMYSGSFWNRMRKPLPLRTQVIRFTVVFVIVSFILAVALQITHERMPDPKVTKPLPDLGFELLTKVPGMYVLADCCIGFLNILSVFTAFKLYLLHRHCVGSGEPELPCNIPGVSRFFLSVWLCKENCRIELRNIHTIAWIRFITSYALLLLFRSAVIVMTSLPAPDDLCQDPPKIENPVKNVILTVLTAGGGSIHCGDLMYSGHTVILTLHLMFHWIYGAMVHWSFRPVVTVVAIFGYYCIVASRFHYTDDVLVAIYLTIATFIAVGHNADGAPWQLQLFIRWWPCCGANSREVTEDSQPVMVAFKSEELDEMNGVLEGRQKKHGGVGDGESLMFKCGAYV.

Topologically, residues 1 to 44 (MISYPFFSLSPPGLVPPPMAVPPVEMYSGSFWNRMRKPLPLRTQ) are cytoplasmic. Residues 45 to 65 (VIRFTVVFVIVSFILAVALQI) form a helical membrane-spanning segment. The Lumenal segment spans residues 66 to 92 (THERMPDPKVTKPLPDLGFELLTKVPG). Residues 93 to 113 (MYVLADCCIGFLNILSVFTAF) form a helical membrane-spanning segment. At 114 to 165 (KLYLLHRHCVGSGEPELPCNIPGVSRFFLSVWLCKENCRIELRNIHTIAWIR) the chain is on the cytoplasmic side. The chain crosses the membrane as a helical span at residues 166-186 (FITSYALLLLFRSAVIVMTSL). At 187 to 229 (PAPDDLCQDPPKIENPVKNVILTVLTAGGGSIHCGDLMYSGHT) the chain is on the lumenal side. His228 is a catalytic residue. Residues 230-250 (VILTLHLMFHWIYGAMVHWSF) form a helical membrane-spanning segment. Position 251 (Arg251) is a topological domain, cytoplasmic. The helical transmembrane segment at 252 to 272 (PVVTVVAIFGYYCIVASRFHY) threads the bilayer. Active-site residues include His271 and Asp275. Residues 273–275 (TDD) are Lumenal-facing. A helical membrane pass occupies residues 276–296 (VLVAIYLTIATFIAVGHNADG). The Cytoplasmic segment spans residues 297–365 (APWQLQLFIR…SLMFKCGAYV (69 aa)).

It belongs to the sphingomyelin synthase family.

The protein localises to the golgi apparatus membrane. It catalyses the reaction an N-acylsphing-4-enine + a 1,2-diacyl-sn-glycero-3-phosphocholine = a sphingomyelin + a 1,2-diacyl-sn-glycerol. It carries out the reaction an N-acylsphinganine + a 1,2-diacyl-sn-glycero-3-phosphocholine = an N-acylsphinganine-1-phosphocholine + a 1,2-diacyl-sn-glycerol. The catalysed reaction is an N-acylsphing-4-enine + a 1,2-diacyl-sn-glycero-3-phosphoethanolamine = an N-acylsphing-4-enine 1-phosphoethanolamine + a 1,2-diacyl-sn-glycerol. The enzyme catalyses an N-acylsphinganine + a 1,2-diacyl-sn-glycero-3-phosphoethanolamine = an N-acylsphinganine-1-phosphoethanolamine + a 1,2-diacyl-sn-glycerol. It catalyses the reaction a 1,2-diacyl-sn-glycero-3-phospho-(1D-myo-inositol) + an N-acylsphing-4-enine = an N-acylsphing-4-enine-(1D-myo-inositol) + a 1,2-diacyl-sn-glycerol. It carries out the reaction an N-acylsphinganine + a 1,2-diacyl-sn-glycero-3-phospho-(1D-myo-inositol) = an N-acylsphinganine-(1D-myo-inositol) + a 1,2-diacyl-sn-glycerol. Bifunctional sphingomyelin (SM)/ethanolamine phosphorylceramide (EPC) synthase with minimal inositol phosphorylceramide (IPC) synthase activity. Specificity is likely to be defined by residues in the lumenal catalytic domain that interact with the polar head groups of the phospholipid donors. SM is synthesized by both stages of the parasite life cycle, bloodstream forms (BSF) and procyclic forms (PCF), by transferring the phosphoryl headgroup from a 1,2-diacyl-sn-glycero-3-phosphocholine to an N-acylsphing-4-enine (ceramide) or an N-acylsphinganine (dihydroceramide) with release of 1,2-diacyl-sn-glycerol. Also catalyzes the reverse reaction, production of ceramide from sphingomyelin. EPC is synthesized by transferring phosphoethanolamine from a 1,2-diacyl-sn-glycero-3-phosphoethanolamine to ceramide or dihydroceramide by BSF and PCF, while IPC is confined to PCF. The ceramide/dihydroceramide ratios are skewed towards dihydroceramide in PCF parasites and ceramide in BSF parasites, this is likely due to differential expression and/or regulation of dihydroceramide desaturase, the enzyme responsible for converting dihydroceramide to ceramide. This is Phosphatidylcholine:ceramide cholinephosphotransferase 4 from Trypanosoma brucei brucei.